The sequence spans 135 residues: Protein PilG (135 aa).

The Response regulatory domain maps to 9-125 (KVMVIDDSKT…ELLGAIKAHV (117 aa)). The residue at position 58 (Asp-58) is a 4-aspartylphosphate.

In terms of processing, phosphorylated.

Functionally, plays an essential role in both cAMP-dependent and independent regulation of twitching motility. Regulates the cAMP-independent coordination of type IV pilus (T4P) biogenesis and retraction that plays a role in surface and host cell adhesion, colonization, biofilm maturation, virulence, and twitching. In addition, phosphorylated PilG is necessary for cAMP production via regulation of the adenylate cyclase CyaB. Acts therefore as a response regulator of the chemosensory system/Chp system. This is Protein PilG (pilG) from Pseudomonas aeruginosa (strain ATCC 15692 / DSM 22644 / CIP 104116 / JCM 14847 / LMG 12228 / 1C / PRS 101 / PAO1).